Here is a 262-residue protein sequence, read N- to C-terminus: (5R,7aS)-5-hydroxy-7a-methyl-1-oxo-2,3,5,6,7,7a-hexahydro-1H-indene-carboxyl-CoA reductase (262 aa).

NAD(+)-binding residues include aspartate 50, aspartate 77, valine 78, asparagine 104, tyrosine 170, lysine 174, and alanine 203. The active-site Proton acceptor is tyrosine 170.

It belongs to the short-chain dehydrogenases/reductases (SDR) family.

The enzyme catalyses (5R,7aS)-5-hydroxy-7a-methyl-1-oxo-2,3,5,6,7,7a-hexahydro-1H-indene-carboxyl-CoA + NAD(+) = (7aS)-7a-methyl-1,5-dioxo-2,3,5,6,7,7a-hexahydro-1H-indene-carboxyl-CoA + NADH + H(+). It participates in steroid metabolism; cholesterol degradation. With respect to regulation, requires the presence of IpdC. Involved in the final steps of cholesterol and steroid degradation. Probably catalyzes the oxidation of the 5-OH group of (5R,7aS)-5-hydroxy-7a-methyl-1-oxo-2,3,5,6,7,7a-hexahydro-1H-indene-carboxyl-CoA, leading to the formation of HIEC-CoA. This chain is (5R,7aS)-5-hydroxy-7a-methyl-1-oxo-2,3,5,6,7,7a-hexahydro-1H-indene-carboxyl-CoA reductase, found in Mycobacterium tuberculosis (strain ATCC 25618 / H37Rv).